A 265-amino-acid chain; its full sequence is MSGEVDYGFGDLMDDPEDYCPPTPPPTSQVFTMQSGKPITLHLVGASPTEAHHLWNGAKMIADFFEEDLSRVKGKTVLELGAAAGLPSLVAAILGAHKVVVTDYPDPDIIRIMQKNVDECDETVEPRGRIVDTVDAMGFVWGADSVPLLARLNPTDDSHKERFDILILADLLFRHSEHGNMVKTIKETLKISRESVAYVFFTSYRPWKKELDMGFFDIAREQGFEVEQIAERRLDKPLFENDPGDLDVQKTVKGFAVRWSAEACN.

S-adenosyl-L-methionine contacts are provided by residues Trp55, 81–83 (GAA), Asp103, Trp141, and Ala169.

The protein belongs to the class I-like SAM-binding methyltransferase superfamily. EFM7 family.

The protein localises to the cytoplasm. Functionally, S-adenosyl-L-methionine-dependent protein methyltransferase that trimethylates the N-terminal glycine 'Gly-2' of elongation factor 1-alpha, before also catalyzing the mono- and dimethylation of 'Lys-3'. This chain is Protein N-terminal and lysine N-methyltransferase EFM7, found in Gibberella zeae (strain ATCC MYA-4620 / CBS 123657 / FGSC 9075 / NRRL 31084 / PH-1) (Wheat head blight fungus).